A 277-amino-acid chain; its full sequence is Glycerol-3-phosphate acyltransferase (277 aa).

The next 5 membrane-spanning stretches (helical) occupy residues 3 to 23 (LFIF…AIIV), 55 to 75 (IMVM…AKFL), 79 to 99 (PVTV…PVFF), 111 to 131 (IGAL…TWLL), and 155 to 175 (LILV…ILVL). The disordered stretch occupies residues 207-277 (SPATSAEQEF…PKTKTVKEKE (71 aa)). Basic and acidic residues predominate over residues 216 to 239 (FPGKEVIDTNIDETEKTEQAEAVK). Composition is skewed to basic residues over residues 240-253 (KPKV…AKKT) and 262-271 (KPKSTKPKTK).

It belongs to the PlsY family. In terms of assembly, probably interacts with PlsX.

Its subcellular location is the cell inner membrane. The catalysed reaction is an acyl phosphate + sn-glycerol 3-phosphate = a 1-acyl-sn-glycero-3-phosphate + phosphate. It functions in the pathway lipid metabolism; phospholipid metabolism. Functionally, catalyzes the transfer of an acyl group from acyl-phosphate (acyl-PO(4)) to glycerol-3-phosphate (G3P) to form lysophosphatidic acid (LPA). This enzyme utilizes acyl-phosphate as fatty acyl donor, but not acyl-CoA or acyl-ACP. The sequence is that of Glycerol-3-phosphate acyltransferase from Legionella pneumophila subsp. pneumophila (strain Philadelphia 1 / ATCC 33152 / DSM 7513).